The following is a 2434-amino-acid chain: Protein Ycf2 (2434 aa).

1693–1700 (GPTETGRS) serves as a coordination point for ATP.

The protein belongs to the Ycf2 family.

The protein localises to the plastid. The protein resides in the chloroplast stroma. Its function is as follows. Probable ATPase of unknown function. Its presence in a non-photosynthetic plant (Epifagus virginiana) and experiments in tobacco indicate that it has an essential function which is probably not related to photosynthesis. This Cycas taitungensis (Prince sago) protein is Protein Ycf2.